Here is a 107-residue protein sequence, read N- to C-terminus: Replication initiation control protein YabA (107 aa).

Zn(2+)-binding residues include His-81, Cys-83, Cys-97, and Cys-100.

The protein belongs to the YabA family. Homotetramer. Interacts with both DnaA and DnaN, acting as a bridge between these two proteins. Zn(2+) is required as a cofactor.

Its subcellular location is the cytoplasm. The protein localises to the nucleoid. Involved in control of chromosome replication initiation. Inhibits the cooperative binding of DnaA to the oriC region, thus negatively regulating initiation of chromosome replication. Inhibits the ability of DnaA-ATP to form a helix on DNA; does not disassemble preformed DnaA-DNA helices. Decreases the residence time of DnaA on the chromosome at its binding sites (oriC, replication forks and promoter-binding sites). Tethers DnaA to the replication machinery via the DNA polymerase beta sliding clamp subunit (dnaN). Associates with oriC and other DnaA targets on the chromosome in a DnaA-dependent manner. The sequence is that of Replication initiation control protein YabA from Streptococcus pyogenes serotype M3 (strain ATCC BAA-595 / MGAS315).